Reading from the N-terminus, the 709-residue chain is MKRNTLLALVLVILIFPTLSTAYIEFTTSINQAIPDSLVYATSAYYDGKIFLIGGENLYSTPVNSVYVYENGSWYLGPSLPFSLSSAGATVCNNTLYVVGGANSTSIFGGILEFIGNGWKVITNSMPIPVYGAIVFSYDYKIYVIGGMNYSGNSLVPPVNYIQVYNLKTNSWQIIGNAPLRLAYSAYYFNGSALFVVGGFTQSATLTSSVFVYYPENNTWISLPSLPGVEAGGVLGYYNGYMYLVGGLYYVSGAYQLGEILYYYNGTWRNTNIQEQIPTQFSTSVQIGNKLIILGGFGPGNIPSNAMQTVSIYLPPPKPQIASIASGNETITVKWYDTNASGYYITYWSNFSQKVTINVGNVTSYTIKHLKDGVTYYIQIVPYNSLGNGTPSDIISATPSSVPNPPIIKVKIGNLNATLTWYDTFNGGYPIEGYYLYVNGKGINVGNITSYVLTNLTAGELYTIELIAYNKIGNSSISSVSFIAASKANLTVTVYKKINGFLVSWNSTSKAKYILTVSKENVVLLNVSTTNTSYFVKVPFGVYNISLEAVNIVGITKYAFILIYYIQPASPTVNWSITLNTVSLNWSKVSGAEYYLIYDNGKLITNTTNTAFTFNLTIGQNEIEVYAANAYYKSAPYIINDVRNYIVVVNSTAISISVPQIKVVSGENTDAPLQTNNIDLKSAIIVITVFVIALLMILVILRERSDNYW.

Residues 1 to 22 (MKRNTLLALVLVILIFPTLSTA) form the signal peptide. 6 Kelch repeats span residues 49–94 (KIFL…VCNN), 96–140 (LYVV…SYDY), 141–192 (KIYV…FNGS), 193–240 (ALFV…YYNG), 242–288 (MYLV…VQIG), and 290–340 (KLII…DTNA). 4 Fibronectin type-III domains span residues 315–405 (PPPK…VPNP), 406–488 (PIIK…ASKA), 489–566 (NLTV…IYYI), and 568–643 (PASP…NDVR).

The sequence is that of Kelch domain-containing protein STK_09390 from Sulfurisphaera tokodaii (strain DSM 16993 / JCM 10545 / NBRC 100140 / 7) (Sulfolobus tokodaii).